Here is a 397-residue protein sequence, read N- to C-terminus: Acetate kinase (397 aa).

N7 lines the Mg(2+) pocket. K14 contributes to the ATP binding site. R90 is a substrate binding site. D147 functions as the Proton donor/acceptor in the catalytic mechanism. ATP is bound by residues 207 to 211 (HLGNG), 282 to 284 (DFR), and 330 to 334 (GLGEN). E383 contacts Mg(2+).

This sequence belongs to the acetokinase family. As to quaternary structure, homodimer. Mg(2+) is required as a cofactor. Requires Mn(2+) as cofactor.

The protein resides in the cytoplasm. The catalysed reaction is acetate + ATP = acetyl phosphate + ADP. It functions in the pathway metabolic intermediate biosynthesis; acetyl-CoA biosynthesis; acetyl-CoA from acetate: step 1/2. Its function is as follows. Catalyzes the formation of acetyl phosphate from acetate and ATP. Can also catalyze the reverse reaction. This Clostridium botulinum (strain Kyoto / Type A2) protein is Acetate kinase.